The following is a 148-amino-acid chain: Protoporphyrinogen IX oxidase (148 aa).

4 helical membrane passes run 7-27 (YFLWVKAFHVIAVISWMAALF), 59-79 (FIASPAMGFTLITGILMLLIA), 86-106 (GGWLHAKLALVVLLLIYHFYC), and 128-148 (FNEIPTILMILIVILVVVKPF). His-15 serves as a coordination point for heme. Heme is bound at residue Lys-92.

The protein belongs to the HemJ family. As to quaternary structure, homodimer. Requires heme b as cofactor.

The protein localises to the cell membrane. The enzyme catalyses protoporphyrinogen IX + 3 A = protoporphyrin IX + 3 AH2. The protein operates within porphyrin-containing compound metabolism; protoporphyrin-IX biosynthesis; protoporphyrin-IX from protoporphyrinogen-IX: step 1/1. Its function is as follows. Catalyzes the oxidation of protoporphyrinogen IX to protoporphyrin IX. Is involved in the biosynthesis of tetrapyrrole molecules like heme. Does not use oxygen or artificial electron acceptors such as menadione or benzoquinone. This Helicobacter pylori (strain J99 / ATCC 700824) (Campylobacter pylori J99) protein is Protoporphyrinogen IX oxidase.